The primary structure comprises 141 residues: Nucleoside triphosphatase NudI (141 aa).

Positions 1-141 (MRQRTIVCPI…RLTFTQKGLL (141 aa)) constitute a Nudix hydrolase domain. Residues 38-59 (GGMEPGETMEEALRREIREELG) carry the Nudix box motif.

Belongs to the Nudix hydrolase family. NudI subfamily. In terms of assembly, monomer. Requires Mg(2+) as cofactor.

The catalysed reaction is a ribonucleoside 5'-triphosphate + H2O = a ribonucleoside 5'-phosphate + diphosphate + H(+). The enzyme catalyses a 2'-deoxyribonucleoside 5'-triphosphate + H2O = a 2'-deoxyribonucleoside 5'-phosphate + diphosphate + H(+). It carries out the reaction dUTP + H2O = dUMP + diphosphate + H(+). It catalyses the reaction dTTP + H2O = dTMP + diphosphate + H(+). The catalysed reaction is dCTP + H2O = dCMP + diphosphate + H(+). In terms of biological role, catalyzes the hydrolysis of nucleoside triphosphates, with a preference for pyrimidine deoxynucleoside triphosphates (dUTP, dTTP and dCTP). This chain is Nucleoside triphosphatase NudI, found in Enterobacter sp. (strain 638).